Consider the following 455-residue polypeptide: MTQVMTPKTIVHELERHIIGQNDAKKAVAIALRNRWRRMQLDDEMRQEVTPKNILMIGPTGVGKTEIARRLAKLADAPFIKVEATKFTEVGYVGKDVESIIRDLVETAVKMKREEAKQKVTEKAAILAEDRILDVLIPPARASESKVGFANEPAEDAQSKKEKENKTREIFRKKIQNGELNDKEIEIEVSVAPKSIGVMGPPGMEDMTNQLQDLFSSLSSDKKKTKKMRIKDAIKLVKDEEAAKLINEEDIKARALESVEQNGIVFLDEIDKVCKKSGTSGADVSREGVQRDLLPLVEGSTVSTKYGMIKTDHILFIASGAFHVAKPSDLIPELQGRLPIRVELKSLEIEDFVRILKEPDCSILKQYIALMKTEGVELSFEEDAIRKIAEISFQVNEEVENIGARRLHTVMERLLEEISFDAPDLENKSINITTDYINEKLSGLVKNKNLSQYIL.

Residues I19, 61 to 66, D268, E333, and R405 each bind ATP; that span reads GVGKTE.

This sequence belongs to the ClpX chaperone family. HslU subfamily. A double ring-shaped homohexamer of HslV is capped on each side by a ring-shaped HslU homohexamer. The assembly of the HslU/HslV complex is dependent on binding of ATP.

It is found in the cytoplasm. Its function is as follows. ATPase subunit of a proteasome-like degradation complex; this subunit has chaperone activity. The binding of ATP and its subsequent hydrolysis by HslU are essential for unfolding of protein substrates subsequently hydrolyzed by HslV. HslU recognizes the N-terminal part of its protein substrates and unfolds these before they are guided to HslV for hydrolysis. The protein is ATP-dependent protease ATPase subunit HslU of Francisella philomiragia subsp. philomiragia (strain ATCC 25017 / CCUG 19701 / FSC 153 / O#319-036).